A 213-amino-acid chain; its full sequence is Putative thiamine-phosphate synthase (213 aa).

4-amino-2-methyl-5-(diphosphooxymethyl)pyrimidine-binding positions include 38 to 42 and N70; that span reads QLREK. D71 is a Mg(2+) binding site. 4-amino-2-methyl-5-(diphosphooxymethyl)pyrimidine is bound at residue S109. A 2-[(2R,5Z)-2-carboxy-4-methylthiazol-5(2H)-ylidene]ethyl phosphate-binding site is contributed by 135–137; the sequence is TPS. K138 contributes to the 4-amino-2-methyl-5-(diphosphooxymethyl)pyrimidine binding site. 2-[(2R,5Z)-2-carboxy-4-methylthiazol-5(2H)-ylidene]ethyl phosphate contacts are provided by residues G166 and 186–187; that span reads IS.

The protein belongs to the thiamine-phosphate synthase family. Requires Mg(2+) as cofactor.

It carries out the reaction 2-[(2R,5Z)-2-carboxy-4-methylthiazol-5(2H)-ylidene]ethyl phosphate + 4-amino-2-methyl-5-(diphosphooxymethyl)pyrimidine + 2 H(+) = thiamine phosphate + CO2 + diphosphate. The enzyme catalyses 2-(2-carboxy-4-methylthiazol-5-yl)ethyl phosphate + 4-amino-2-methyl-5-(diphosphooxymethyl)pyrimidine + 2 H(+) = thiamine phosphate + CO2 + diphosphate. It catalyses the reaction 4-methyl-5-(2-phosphooxyethyl)-thiazole + 4-amino-2-methyl-5-(diphosphooxymethyl)pyrimidine + H(+) = thiamine phosphate + diphosphate. The protein operates within cofactor biosynthesis; thiamine diphosphate biosynthesis; thiamine phosphate from 4-amino-2-methyl-5-diphosphomethylpyrimidine and 4-methyl-5-(2-phosphoethyl)-thiazole: step 1/1. Condenses 4-methyl-5-(beta-hydroxyethyl)thiazole monophosphate (THZ-P) and 2-methyl-4-amino-5-hydroxymethyl pyrimidine pyrophosphate (HMP-PP) to form thiamine monophosphate (TMP). In Geobacter sulfurreducens (strain ATCC 51573 / DSM 12127 / PCA), this protein is Putative thiamine-phosphate synthase (thiE).